A 175-amino-acid chain; its full sequence is DASH complex subunit DAM1 (175 aa).

Positions 1–39 (MAPEDTNPQSSHRRTRSTSRSRPTTPLRPSSRSSFRSSA) are disordered. The segment covering 20 to 39 (RSRPTTPLRPSSRSSFRSSA) has biased composition (low complexity).

This sequence belongs to the DASH complex DAM1 family. As to quaternary structure, component of the DASH complex consisting of ASK1, DAD1, DAD2, DAD3, DAD4, DAM1, DUO1, HSK3, SPC19 and SPC34, with a stoichiometry of one copy of each subunit per complex. Multiple DASH complexes oligomerize to form a ring that encircles spindle microtubules and organizes the rod-like NDC80 complexes of the outer kinetochore. DASH complex oligomerization strengthens microtubule attachments. On cytoplasmic microtubules, DASH complexes appear to form patches instead of rings.

The protein localises to the chromosome. The protein resides in the centromere. It is found in the kinetochore. It localises to the cytoplasm. Its subcellular location is the cytoskeleton. The protein localises to the spindle. The protein resides in the nucleus. In terms of biological role, component of the DASH complex that connects microtubules with kinetochores and couples microtubule depolymerisation to chromosome movement; it is involved in retrieving kinetochores to the spindle poles before their re-orientation on the spindle in early mitosis and allows microtubule depolymerization to pull chromosomes apart and resist detachment during anaphase. Kinetochores, consisting of a centromere-associated inner segment and a microtubule-contacting outer segment, play a crucial role in chromosome segregation by mediating the physical connection between centromeric DNA and microtubules. Kinetochores also serve as an input point for the spindle assembly checkpoint, which delays anaphase until all chromosomes have bioriented on the mitotic spindle. The chain is DASH complex subunit DAM1 from Chaetomium thermophilum (strain DSM 1495 / CBS 144.50 / IMI 039719) (Thermochaetoides thermophila).